A 299-amino-acid polypeptide reads, in one-letter code: Oxaloacetate decarboxylase (299 aa).

Serine 57 is a substrate binding site. Residue aspartate 95 coordinates Mg(2+). Positions 167 and 243 each coordinate substrate.

The protein belongs to the isocitrate lyase/PEP mutase superfamily. Oxaloacetate decarboxylase family. In terms of assembly, homotetramer; dimer of dimers. It depends on Mg(2+) as a cofactor.

The enzyme catalyses oxaloacetate + H(+) = pyruvate + CO2. Functionally, catalyzes the decarboxylation of oxaloacetate into pyruvate. Seems to play a role in maintaining cellular concentrations of bicarbonate and pyruvate. The chain is Oxaloacetate decarboxylase from Paraburkholderia xenovorans (strain LB400).